Here is a 193-residue protein sequence, read N- to C-terminus: Ribosomal RNA small subunit methyltransferase G (193 aa).

Residues Gly62, Phe67, Ile111–Glu112, and Arg125 each bind S-adenosyl-L-methionine.

It belongs to the methyltransferase superfamily. RNA methyltransferase RsmG family.

Its subcellular location is the cytoplasm. It carries out the reaction guanosine(527) in 16S rRNA + S-adenosyl-L-methionine = N(7)-methylguanosine(527) in 16S rRNA + S-adenosyl-L-homocysteine. Specifically methylates the N7 position of guanine in position 527 of 16S rRNA. In Gluconobacter oxydans (strain 621H) (Gluconobacter suboxydans), this protein is Ribosomal RNA small subunit methyltransferase G.